Consider the following 543-residue polypeptide: Protein phosphatase 1G (543 aa).

A lipid anchor (N-myristoyl glycine) is attached at Gly-2. Arg-22 carries the post-translational modification Omega-N-methylarginine. The 478-residue stretch at 26 to 503 folds into the PPM-type phosphatase domain; the sequence is PYGFSAMQGW…DNMTCIIICF (478 aa). Mn(2+)-binding residues include Asp-60 and Gly-61. Disordered stretches follow at residues 116–139 and 163–326; these read QIAG…DVDN and NCHK…SDSG. Phosphothreonine is present on Thr-122. Acidic residues predominate over residues 123 to 139; that stretch reads EDEDEKEKVADEDDVDN. Position 183 is a phosphoserine (Ser-183). The span at 259 to 310 shows a compositional bias: acidic residues; it reads DSEDESDEAEEEEEDSEECSEEEDGYSSEEAENEEDEDDTEEAEEDDEEEEM. Lys-381 is subject to N6-acetyllysine. The Mn(2+) site is built by Asp-439 and Asp-494. The segment at 508 to 543 is disordered; that stretch reads TAAPQPESGKRKLEEVLSTEGAEENGNSDKKKAKRD. At Ser-525 the chain carries Phosphoserine.

It belongs to the PP2C family. As to quaternary structure, interacts with NOL3; may dephosphorylate NOL3. Mg(2+) serves as cofactor. Requires Mn(2+) as cofactor.

It is found in the cytoplasm. The protein resides in the membrane. The enzyme catalyses O-phospho-L-seryl-[protein] + H2O = L-seryl-[protein] + phosphate. It catalyses the reaction O-phospho-L-threonyl-[protein] + H2O = L-threonyl-[protein] + phosphate. This chain is Protein phosphatase 1G (PPM1G), found in Bos taurus (Bovine).